Reading from the N-terminus, the 185-residue chain is Probable NEDD8-conjugating enzyme Ubc12-like (185 aa).

A disordered region spans residues 8–29 (KEKQREESQSNNGRGASTVKKQ). Polar residues predominate over residues 16-28 (QSNNGRGASTVKK). The 146-residue stretch at 31–176 (AGELRLHKDI…VRRAMMGGQV (146 aa)) folds into the UBC core domain. Cysteine 114 serves as the catalytic Glycyl thioester intermediate.

It belongs to the ubiquitin-conjugating enzyme family. UBC12 subfamily.

It participates in protein modification; protein neddylation. Accepts the ubiquitin-like protein NEDD8/RUB1 from the ECR1-AXR1 E1 complex and catalyzes its covalent attachment to other proteins. In Arabidopsis thaliana (Mouse-ear cress), this protein is Probable NEDD8-conjugating enzyme Ubc12-like (RCE2).